We begin with the raw amino-acid sequence, 437 residues long: Serine--tRNA ligase (437 aa).

L-serine is bound at residue 244–246 (TAE). 275–277 (RSE) provides a ligand contact to ATP. Residue Glu-298 participates in L-serine binding. An ATP-binding site is contributed by 362–365 (EISS). Position 397 (Ser-397) interacts with L-serine.

It belongs to the class-II aminoacyl-tRNA synthetase family. Type-1 seryl-tRNA synthetase subfamily. Homodimer. The tRNA molecule binds across the dimer.

The protein resides in the cytoplasm. It carries out the reaction tRNA(Ser) + L-serine + ATP = L-seryl-tRNA(Ser) + AMP + diphosphate + H(+). It catalyses the reaction tRNA(Sec) + L-serine + ATP = L-seryl-tRNA(Sec) + AMP + diphosphate + H(+). Its pathway is aminoacyl-tRNA biosynthesis; selenocysteinyl-tRNA(Sec) biosynthesis; L-seryl-tRNA(Sec) from L-serine and tRNA(Sec): step 1/1. Its function is as follows. Catalyzes the attachment of serine to tRNA(Ser). Is also able to aminoacylate tRNA(Sec) with serine, to form the misacylated tRNA L-seryl-tRNA(Sec), which will be further converted into selenocysteinyl-tRNA(Sec). The polypeptide is Serine--tRNA ligase (Nitrosomonas eutropha (strain DSM 101675 / C91 / Nm57)).